A 1044-amino-acid chain; its full sequence is Probable translation initiation factor IF-2 (1044 aa).

One can recognise a DOD-type homing endonuclease domain in the interval 173 to 265 (FAGTIFGREN…LSLILLRLGI (93 aa)). The tr-type G domain occupies 451-668 (TTETHNFIAN…LIAGLSQKYL (218 aa)). GTP contacts are provided by residues 524–528 (DTPGH) and 578–581 (NKID).

This sequence belongs to the TRAFAC class translation factor GTPase superfamily. Classic translation factor GTPase family. IF-2 subfamily. This protein undergoes a protein self splicing that involves a post-translational excision of the intervening region (intein) followed by peptide ligation.

Function in general translation initiation by promoting the binding of the formylmethionine-tRNA to ribosomes. Seems to function along with eIF-2. The polypeptide is Probable translation initiation factor IF-2 (infB) (Pyrococcus horikoshii (strain ATCC 700860 / DSM 12428 / JCM 9974 / NBRC 100139 / OT-3)).